Here is a 703-residue protein sequence, read N- to C-terminus: MEEIKIETVVNGAPYSIETGYFAKQANGAVIVRQGDTAVLVAAVMSEEPQADIDFLPLTVEYREKYYAYGKIPGGFVKREGKPSEREILVARNIDRPIRPLFPKGFYNDVIITAYTLSADDQYDPDVLGIVGASAALHISDIPFEGPIAGVRVCRVDGQFIVNPTYQQKAKSDLEIVVAGSKDAIVMVEGGAKEVPEEVILEAMLFGHQEIKKLIELQEELRAKYGKEKIEIPIDEEEILLKEKFKELAYVRIKEAFNISDKKERNKQINAIFEEIKTTLEIPEEKVKKASFVYKDVVSNVMRDLVLYENIRIDGRKPEEIRPIWIKVGVFPRNHGSAIFTRGQTQAFVTVTLGSPSEGQIEESIEAGETLKRFMLHYNFPPFSTGEAKPPRPVSRREIGHGNLAERALEPLIPSEEEFPYVIRVVSDILESNGSTSMATVCGGSLALFDAGVPMKKHVAGIAMGLIKSEDKFVVLSDILGDEDHLGDMDFKVAGTRDGVTSIQMDIKVKGLTREILQKALEQAREGRNYILDLMYQAIPEPRKELSPYAPTVTTLRVLPEKISVIIGPAGKNIKKIIEETGVKIDLDPTGLVKIYATSKIAAEKAIDMINQLIMDIELGEVYLGKVTRVEDYGAFVELMPGKLSLLHVSQISSERLKSAKDVVKVGDVLKVKVSEIDDQGRIKVSLKDVPENVEAKNKFLFE.

Mg(2+)-binding residues include Asp484 and Asp490. In terms of domain architecture, KH spans 551–610 (PTVTTLRVLPEKISVIIGPAGKNIKKIIEETGVKIDLDPTGLVKIYATSKIAAEKAIDMI). An S1 motif domain is found at 620-688 (GEVYLGKVTR…DQGRIKVSLK (69 aa)).

The protein belongs to the polyribonucleotide nucleotidyltransferase family. Mg(2+) serves as cofactor.

Its subcellular location is the cytoplasm. The catalysed reaction is RNA(n+1) + phosphate = RNA(n) + a ribonucleoside 5'-diphosphate. Functionally, involved in mRNA degradation. Catalyzes the phosphorolysis of single-stranded polyribonucleotides processively in the 3'- to 5'-direction. This Sulfurihydrogenibium sp. (strain YO3AOP1) protein is Polyribonucleotide nucleotidyltransferase.